The following is a 189-amino-acid chain: Threonylcarbamoyl-AMP synthase (189 aa).

In terms of domain architecture, YrdC-like spans 6-189 (TAIFTPIIDA…VLTGEQIRQG (184 aa)).

The protein belongs to the SUA5 family. TsaC subfamily.

Its subcellular location is the cytoplasm. The enzyme catalyses L-threonine + hydrogencarbonate + ATP = L-threonylcarbamoyladenylate + diphosphate + H2O. Required for the formation of a threonylcarbamoyl group on adenosine at position 37 (t(6)A37) in tRNAs that read codons beginning with adenine. Catalyzes the conversion of L-threonine, HCO(3)(-)/CO(2) and ATP to give threonylcarbamoyl-AMP (TC-AMP) as the acyladenylate intermediate, with the release of diphosphate. The polypeptide is Threonylcarbamoyl-AMP synthase (Serratia proteamaculans (strain 568)).